The sequence spans 310 residues: Aspartate carbamoyltransferase catalytic subunit (310 aa).

Residues Arg58 and Thr59 each coordinate carbamoyl phosphate. Lys87 is an L-aspartate binding site. Residues Arg108, His136, and Gln139 each coordinate carbamoyl phosphate. L-aspartate-binding residues include Arg169 and Arg229. Carbamoyl phosphate-binding residues include Leu268 and Pro269.

It belongs to the aspartate/ornithine carbamoyltransferase superfamily. ATCase family. In terms of assembly, heterododecamer (2C3:3R2) of six catalytic PyrB chains organized as two trimers (C3), and six regulatory PyrI chains organized as three dimers (R2).

It carries out the reaction carbamoyl phosphate + L-aspartate = N-carbamoyl-L-aspartate + phosphate + H(+). It functions in the pathway pyrimidine metabolism; UMP biosynthesis via de novo pathway; (S)-dihydroorotate from bicarbonate: step 2/3. Functionally, catalyzes the condensation of carbamoyl phosphate and aspartate to form carbamoyl aspartate and inorganic phosphate, the committed step in the de novo pyrimidine nucleotide biosynthesis pathway. This Leptospira biflexa serovar Patoc (strain Patoc 1 / Ames) protein is Aspartate carbamoyltransferase catalytic subunit.